The following is a 247-amino-acid chain: Adenosylcobinamide-GDP ribazoletransferase (247 aa).

5 consecutive transmembrane segments (helical) span residues 34-54, 59-79, 113-133, 138-158, and 194-214; these read IVMFPFIGLILGGISGLIFIL, CGIPLAALFCILALALLTGGF, GGLALIFVLLAKILVVSELAL, MLAALAAACAAGRGSAVLLMY, and VLLLGMQGLATMVVTLAAIFI.

This sequence belongs to the CobS family. It depends on Mg(2+) as a cofactor.

Its subcellular location is the cell inner membrane. It carries out the reaction alpha-ribazole + adenosylcob(III)inamide-GDP = adenosylcob(III)alamin + GMP + H(+). It catalyses the reaction alpha-ribazole 5'-phosphate + adenosylcob(III)inamide-GDP = adenosylcob(III)alamin 5'-phosphate + GMP + H(+). Its pathway is cofactor biosynthesis; adenosylcobalamin biosynthesis; adenosylcobalamin from cob(II)yrinate a,c-diamide: step 7/7. Functionally, joins adenosylcobinamide-GDP and alpha-ribazole to generate adenosylcobalamin (Ado-cobalamin). Also synthesizes adenosylcobalamin 5'-phosphate from adenosylcobinamide-GDP and alpha-ribazole 5'-phosphate. This is Adenosylcobinamide-GDP ribazoletransferase from Salmonella typhi.